Here is a 1131-residue protein sequence, read N- to C-terminus: Probable pre-mRNA-splicing factor ATP-dependent RNA helicase mog-1 (1131 aa).

Composition is skewed to basic and acidic residues over residues 1-12 (MSDKRADGRLEG), 65-122 (RGVT…DRSG), 139-148 (WDQDDREGSS), 160-173 (RGERDRKRYMDSER), 180-225 (RSER…WEEE), and 407-416 (GNYKESHQFA). Disordered stretches follow at residues 1–225 (MSDK…WEEE) and 389–416 (MGVKEKKDETADPEDDDSGNYKESHQFA). The region spanning 451 to 614 (MNVIRENNVV…FGGNCPTFTI (164 aa)) is the Helicase ATP-binding domain. Residue 464–471 (GETGSGKT) participates in ATP binding. A DEAH box motif is present at residues 561-564 (DEAH). The 184-residue stretch at 629 to 812 (PVEDYVDAAV…NVVLLLKSLG (184 aa)) folds into the Helicase C-terminal domain. Composition is skewed to basic and acidic residues over residues 1085-1114 (EMREAQKEMERRKEESDKAFKRPESSRRVV) and 1121-1131 (ARSERRKLWGL). A disordered region spans residues 1085–1131 (EMREAQKEMERRKEESDKAFKRPESSRRVVEVGSKSARSERRKLWGL).

Belongs to the DEAD box helicase family. DEAH subfamily. PRP16 sub-subfamily.

The protein localises to the nucleus. It catalyses the reaction ATP + H2O = ADP + phosphate + H(+). Functionally, probable ATP-binding RNA helicase involved in pre-mRNA splicing. In Caenorhabditis elegans, this protein is Probable pre-mRNA-splicing factor ATP-dependent RNA helicase mog-1 (mog-1).